Reading from the N-terminus, the 112-residue chain is uncharacterized protein (112 aa).

The helical transmembrane segment at 89-106 (TLYVLVIVGLTILCFLLV) threads the bilayer.

This sequence belongs to the IIV-6 466R family.

The protein resides in the membrane. This is an uncharacterized protein from Aedes vexans (Inland floodwater mosquito).